The following is a 540-amino-acid chain: Glucose-6-phosphate isomerase (540 aa).

Glu350 functions as the Proton donor in the catalytic mechanism. Catalysis depends on residues His381 and Lys503.

Belongs to the GPI family.

The protein localises to the cytoplasm. The catalysed reaction is alpha-D-glucose 6-phosphate = beta-D-fructose 6-phosphate. Its pathway is carbohydrate biosynthesis; gluconeogenesis. It participates in carbohydrate degradation; glycolysis; D-glyceraldehyde 3-phosphate and glycerone phosphate from D-glucose: step 2/4. Catalyzes the reversible isomerization of glucose-6-phosphate to fructose-6-phosphate. The polypeptide is Glucose-6-phosphate isomerase (Paraburkholderia phymatum (strain DSM 17167 / CIP 108236 / LMG 21445 / STM815) (Burkholderia phymatum)).